A 251-amino-acid chain; its full sequence is DNA repair protein RecO (251 aa).

Belongs to the RecO family.

In terms of biological role, involved in DNA repair and RecF pathway recombination. The chain is DNA repair protein RecO from Albidiferax ferrireducens (strain ATCC BAA-621 / DSM 15236 / T118) (Rhodoferax ferrireducens).